Reading from the N-terminus, the 546-residue chain is Cytochrome P450 monooxygenase fumoB (546 aa).

A helical transmembrane segment spans residues 13-33; that stretch reads LGYYEKLAGILGIIGLVLLFW. Asparagine 147 carries an N-linked (GlcNAc...) asparagine glycan. Residue cysteine 488 coordinates heme.

It belongs to the cytochrome P450 family. It depends on heme as a cofactor.

It localises to the membrane. It functions in the pathway secondary metabolite biosynthesis. Functionally, cytochrome P450 monooxygenase; part of the gene cluster that mediates the biosynthesis of fumosorinone, a 2-pyridone alkaloid that acts as an inhibitor of protein tyrosine phosphatase 1B which is implicated asa negative regulator of insulin receptor signaling and a potential drug target for the treatment of type II diabetes and other associated metabolic syndromes. The polyketide-amino acid backbone of fumosorinone is first assembled by the PKS-NRPS hybrid fumoS. The PKS modules condense one acetyl-CoA starter unit with 7 malonyl-CoA units, programmed C-methylations occurring after the first 3 and the sixth extensions, and cycles of full reduction occurring after the first 2 extensions. Because fumoS lacks a designated enoyl reductase (ER) domain, the required activity is provided the enoyl reductase fumoC. Upon formation of the polyketide backbone on the thiotemplate, the polyketide is transferred to the NRPS module and linked to tyrosine to produce the acyltetramic acid intermediate called prefumosorinone A. The cytochrome P450 monooxygenase fumoA then probably catalyzes an unprecedented oxidative ring expansion of prefumosorinone A to form prefumosorinone B which contains the 2-pyridone core of fumosorinone. The cytochrome P450 monooxygenase fumoB might hydroxylate the nitrogen of prefumosorinone B, but not the acyltetramic acid prefumosorinone A, to form fumosorinone. The sequence is that of Cytochrome P450 monooxygenase fumoB from Cordyceps fumosorosea (strain ARSEF 2679) (Isaria fumosorosea).